The following is a 911-amino-acid chain: MEVQLGLGRVYPRPPSKTYRGAFQNLFQSVREVIQNPGPRHPEAASAAPPGASLLLQQQQQQQQQQQQQQQQQQQQQQETSPRQQQQQGEDGSPQAHRRGPTGYLVLDEEQQPSQPQSAPECHPERGCVPEPGAAVAASKGLPQQLPAPPDEDDSAAPSTLSLLGPTFPGLSSCSADLKDILSEASTMQLLQQQQQEAVSEGSSSGRAREASGAPTSSKDNYLGGTSTISDSAKELCKAVSVSMGLGVEALEHLSPGEQLRGDCMYAPLLGVPPAVRPTPCAPLAECKGSLLDDSAGKSTEDTAEYSPFKGGYTKGLEGESLGCSGSAAAGSSGTLELPSTLSLYKSGALDEAAAYQSRDYYNFPLALAGPPPPPPPPHPHARIKLENPLDYGSAWAAAAAQCRYGDLASLHGAGAAGPGSGSPSAAASSSWHTLFTAEEGQLYGPCGGGGGGGGGGGGGGGGGEAGAVAPYGYTRPPQGLAGQEGDFTAPDVWYPGGMVSRVPYPSPTCVKSEMGPWMDSYSGPYGDMRLETARDHVLPIDYYFPPQKTCLICGDEASGCHYGALTCGSCKVFFKRAAEGKQKYLCASRNDCTIDKFRRKNCPSCRLRKCYEAGMTLGARKLKKLGNLKLQEEGEASSTTSPTEETTQKLTVSHIEGYECQPIFLNVLEAIEPGVVCAGHDNNQPDSFAALLSSLNELGERQLVHVVKWAKALPGFRNLHVDDQMAVIQYSWMGLMVFAMGWRSFTNVNSRMLYFAPDLVFNEYRMHKSRMYSQCVRMRHLSQEFGWLQITPQEFLCMKALLLFSIIPVDGLKNQKFFDELRMNYIKELDRIIACKRKNPTSCSRRFYQLTKLLDSVQPIARELHQFTFDLLIKSHMVSVDFPEMMAEIISVQVPKILSGKVKPIYFHTQ.

A modulating region spans residues 1–549 (MEVQLGLGRV…PIDYYFPPQK (549 aa)). An interaction with ZNF318 region spans residues 1–578 (MEVQLGLGRV…GSCKVFFKRA (578 aa)). 2 disordered regions span residues 35 to 164 (QNPG…LSLL) and 192 to 225 (QQQQQEAVSEGSSSGRAREASGAPTSSKDNYLGG). A compositionally biased stretch (low complexity) spans 44–88 (AASAAPPGASLLLQQQQQQQQQQQQQQQQQQQQQQETSPRQQQQQ). Ser81 carries the phosphoserine; by CDK9 modification. Ser93 is subject to Phosphoserine. Residues 192 to 214 (QQQQQEAVSEGSSSGRAREASGA) are compositionally biased toward low complexity. Residues 215-225 (PTSSKDNYLGG) are compositionally biased toward polar residues. Tyr222 is modified (phosphotyrosine; by CSK). Phosphoserine is present on Ser255. Tyr266 is modified (phosphotyrosine; by CSK and TNK2). Tyr306, Tyr345, Tyr356, and Tyr361 each carry phosphotyrosine; by CSK. Phosphotyrosine; by CSK and TNK2 is present on Tyr362. Lys385 is covalently cross-linked (Glycyl lysine isopeptide (Lys-Gly) (interchain with G-Cter in SUMO)). A Phosphotyrosine; by CSK modification is found at Tyr392. Lys512 is covalently cross-linked (Glycyl lysine isopeptide (Lys-Gly) (interchain with G-Cter in SUMO)). Residues Tyr526 and Tyr543 each carry the phosphotyrosine; by CSK modification. The tract at residues 543–910 (YYFPPQKTCL…GKVKPIYFHT (368 aa)) is interaction with LPXN. 2 consecutive NR C4-type zinc fingers follow at residues 551 to 571 (CLICGDEASGCHYGALTCGSC) and 587 to 611 (CASRNDCTIDKFRRKNCPSCRLRKC). The nuclear receptor DNA-binding region spans 551 to 623 (CLICGDEASG…AGMTLGARKL (73 aa)). An interaction with HIPK3 region spans residues 563-653 (YGALTCGSCK…TEETTQKLTV (91 aa)). The segment at 583 to 910 (QKYLCASRND…GKVKPIYFHT (328 aa)) is interaction with CCAR1. An interaction with KAT7 region spans residues 616–910 (MTLGARKLKK…GKVKPIYFHT (295 aa)). Ser642 carries the post-translational modification Phosphoserine; by STK4/MST1. Residues 660 to 891 (ECQPIFLNVL…DFPEMMAEII (232 aa)) form the NR LBD domain. 17beta-hydroxy-5alpha-androstan-3-one contacts are provided by Asn697 and Arg744. Residues Lys837 and Lys839 each participate in a glycyl lysine isopeptide (Lys-Gly) (interchain with G-Cter in ubiquitin) cross-link. Residue Thr869 participates in 17beta-hydroxy-5alpha-androstan-3-one binding. A Phosphotyrosine; by CSK modification is found at Tyr907.

The protein belongs to the nuclear hormone receptor family. NR3 subfamily. As to quaternary structure, binds DNA as a homodimer. Part of a ternary complex containing AR, EFCAB6/DJBP and PARK7. Interacts with HIPK3 and NR0B2 in the presence of androgen. The ligand binding domain interacts with KAT7/HBO1 in the presence of dihydrotestosterone. Interacts with EFCAB6/DJBP, PQBP1, RANBP9, RBAK, SPDEF, SRA1, TGFB1I1 and RREB1. Interacts with ZMIZ1/ZIMP10 and ZMIZ2/ZMIP7 which both enhance its transactivation activity. Interacts with SLC30A9 and RAD54L2/ARIP4. Interacts with MACROD1 (via macro domain). Interacts via the ligand-binding domain with LXXLL and FXXLF motifs from NCOA1, NCOA2, NCOA3 and MAGEA11. Interacts (via nuclear receptor DNA binding domain and nuclear receptor ligand binding domain) with NCOA4. The AR N-terminal poly-Gln region binds Ran resulting in enhancement of AR-mediated transactivation. Ran-binding decreases as the poly-Gln length increases. Interacts with HIP1 (via coiled coil domain). Interacts (via ligand-binding domain) with TRIM68. Interacts with TNK2. Interacts with USP26. Interacts with RNF6. Interacts (regulated by RNF6 probably through polyubiquitination) with RNF14; regulates AR transcriptional activity. Interacts with PRMT2 and TRIM24. Interacts with RACK1. Interacts with RANBP10; this interaction enhances dihydrotestosterone-induced AR transcriptional activity. Interacts with PRPF6 in a hormone-independent way; this interaction enhances dihydrotestosterone-induced AR transcriptional activity. Interacts with STK4/MST1. Interacts with ZIPK/DAPK3. Interacts with LPXN. Interacts with MAK. Part of a complex containing AR, MAK and NCOA3. Interacts with CRY1. Interacts with CCAR1 and GATA2. Interacts with ZNF318. Interacts with BUD31. Interacts with ARID4A. Interacts with ARID4B. Interacts (via NR LBD domain) with ZBTB7A; the interaction is direct and androgen-dependent. Interacts with NCOR1. Interacts with NCOR2. Interacts with CRY2 in a ligand-dependent manner. Post-translationally, phosphorylated in prostate cancer cells in response to several growth factors including EGF. Phosphorylation is induced by c-Src kinase (CSK). Tyr-526 is one of the major phosphorylation sites and an increase in phosphorylation and Src kinase activity is associated with prostate cancer progression. Phosphorylation by TNK2 enhances the DNA-binding and transcriptional activity. Phosphorylation at Ser-81 by CDK9 regulates AR promoter selectivity and cell growth. Sumoylated on Lys-385 (major) and Lys-512. Ubiquitinated. Deubiquitinated by USP26. 'Lys-6' and 'Lys-27'-linked polyubiquitination by RNF6 modulates AR transcriptional activity and specificity. In terms of processing, palmitoylated by ZDHHC7 and ZDHHC21. Palmitoylation is required for plasma membrane targeting and for rapid intracellular signaling via ERK and AKT kinases and cAMP generation.

The protein resides in the nucleus. Its subcellular location is the cytoplasm. Functionally, steroid hormone receptors are ligand-activated transcription factors that regulate eukaryotic gene expression and affect cellular proliferation and differentiation in target tissues. Transcription factor activity is modulated by bound coactivator and corepressor proteins like ZBTB7A that recruits NCOR1 and NCOR2 to the androgen response elements/ARE on target genes, negatively regulating androgen receptor signaling and androgen-induced cell proliferation. Transcription activation is also down-regulated by NR0B2. Activated, but not phosphorylated, by HIPK3 and ZIPK/DAPK3. This chain is Androgen receptor (AR), found in Pan troglodytes (Chimpanzee).